A 538-amino-acid polypeptide reads, in one-letter code: NADH-quinone oxidoreductase subunit N (538 aa).

Transmembrane regions (helical) follow at residues 28-48 (LAPV…EAFV), 57-77 (QIIV…TTIA), 94-114 (PTLA…VLFA), 147-167 (HTEV…FAAA), 170-190 (LIMM…LCGM), 206-226 (FLLG…LYGC), 249-269 (IVAG…AVPF), 288-308 (MAVA…YVGL), 315-335 (WQIV…IVGL), 343-363 (LLAY…VGAW), 380-400 (VLVY…LILM), 424-444 (IGVL…TAGF), 458-478 (GYAW…AFYL), and 503-523 (IAGW…GVAP).

Belongs to the complex I subunit 2 family. NDH-1 is composed of 14 different subunits. Subunits NuoA, H, J, K, L, M, N constitute the membrane sector of the complex.

The protein resides in the cell membrane. It catalyses the reaction a quinone + NADH + 5 H(+)(in) = a quinol + NAD(+) + 4 H(+)(out). Its function is as follows. NDH-1 shuttles electrons from NADH, via FMN and iron-sulfur (Fe-S) centers, to quinones in the respiratory chain. The immediate electron acceptor for the enzyme in this species is believed to be a menaquinone. Couples the redox reaction to proton translocation (for every two electrons transferred, four hydrogen ions are translocated across the cytoplasmic membrane), and thus conserves the redox energy in a proton gradient. The protein is NADH-quinone oxidoreductase subunit N of Cutibacterium acnes (strain DSM 16379 / KPA171202) (Propionibacterium acnes).